We begin with the raw amino-acid sequence, 260 residues long: Hydroxyethylthiazole kinase (260 aa).

Position 36 (methionine 36) interacts with substrate. Residues arginine 112 and threonine 157 each contribute to the ATP site. Glycine 184 contributes to the substrate binding site.

The protein belongs to the Thz kinase family. The cofactor is Mg(2+).

The catalysed reaction is 5-(2-hydroxyethyl)-4-methylthiazole + ATP = 4-methyl-5-(2-phosphooxyethyl)-thiazole + ADP + H(+). The protein operates within cofactor biosynthesis; thiamine diphosphate biosynthesis; 4-methyl-5-(2-phosphoethyl)-thiazole from 5-(2-hydroxyethyl)-4-methylthiazole: step 1/1. Catalyzes the phosphorylation of the hydroxyl group of 4-methyl-5-beta-hydroxyethylthiazole (THZ). In Shouchella clausii (strain KSM-K16) (Alkalihalobacillus clausii), this protein is Hydroxyethylthiazole kinase.